The chain runs to 435 residues: Actin-like protein 7A (435 aa).

Residues 1-64 (MWAPPAAIMG…TESKAAKERP (64 aa)) are disordered. A compositionally biased stretch (low complexity) spans 20 to 31 (QAPLQTQALQTA). The interval 31–51 (ASLRDGPAKRAVWVRHTSSEP) is required for interaction with TES. Basic and acidic residues predominate over residues 55–64 (TESKAAKERP).

It belongs to the actin family. Interacts (via N-terminus) with TES (via LIM domain 2). Heterodimer with TES; the heterodimer interacts with ENAH to form a heterotrimer. Interacts with ACTL9. Interacts with CYLC1; the interaction may be relevant for proper acrosome attachment to the nuclear envelope. In terms of tissue distribution, strongly expressed in testis. Also expressed in other tissues.

Its subcellular location is the cytoplasm. The protein resides in the cytoskeleton. The protein localises to the golgi apparatus. It is found in the nucleus. It localises to the cytoplasmic vesicle. Its subcellular location is the secretory vesicle. The protein resides in the acrosome. Functionally, essential for normal spermatogenesis and male fertility. Required for normal sperm head morphology, acroplaxome formation, acrosome attachment, and acrosome granule stability. May anchor and stabilize acrosomal adherence to the acroplaxome at least in part by facilitating the presence of F-actin in the subacrosomal space. May play an important role in formation and fusion of Golgi-derived vesicles during acrosome biogenesis. This chain is Actin-like protein 7A (ACTL7A), found in Homo sapiens (Human).